A 437-amino-acid chain; its full sequence is Phosphomethylpyrimidine synthase (437 aa).

Substrate contacts are provided by residues N69, M98, Y127, H163, 185–187, 226–229, and E265; these read SRG and DACR. H269 provides a ligand contact to Zn(2+). Y292 serves as a coordination point for substrate. Residue H333 participates in Zn(2+) binding. [4Fe-4S] cluster contacts are provided by C409, C412, and C416.

Belongs to the ThiC family. The cofactor is [4Fe-4S] cluster.

The enzyme catalyses 5-amino-1-(5-phospho-beta-D-ribosyl)imidazole + S-adenosyl-L-methionine = 4-amino-2-methyl-5-(phosphooxymethyl)pyrimidine + CO + 5'-deoxyadenosine + formate + L-methionine + 3 H(+). Its pathway is cofactor biosynthesis; thiamine diphosphate biosynthesis. Functionally, catalyzes the synthesis of the hydroxymethylpyrimidine phosphate (HMP-P) moiety of thiamine from aminoimidazole ribotide (AIR) in a radical S-adenosyl-L-methionine (SAM)-dependent reaction. This is Phosphomethylpyrimidine synthase from Clostridium novyi (strain NT).